Here is a 493-residue protein sequence, read N- to C-terminus: GPI alpha-1,6-mannosyltransferase 2 (493 aa).

Over 1-13 (MWPQDPSRKEVLR) the chain is Cytoplasmic. Residues 14-34 (FAVSCRILTLMLQALFNAIIP) traverse the membrane as a helical segment. Residues 35–77 (DHHAEAFSPPRLAPSGFVDQLVEGLLGGLSHWDAEHFLFIAEH) lie on the Lumenal side of the membrane. A helical transmembrane segment spans residues 78–98 (GYLYEHNFAFFPGFPLALLVG). The Cytoplasmic segment spans residues 99–113 (TELLRPLRGLLSLRS). A helical membrane pass occupies residues 114–134 (CLLISVASLNFLFFMLAAVAL). At 135 to 136 (HD) the chain is on the lumenal side. The chain crosses the membrane as a helical span at residues 137–157 (LGCLVLHCPHQSFYAALLFCL). Topologically, residues 158–161 (SPAN) are cytoplasmic. A helical membrane pass occupies residues 162-182 (VFLAAGYSEALFALLTFSAMG). Residues 183 to 192 (QLERGRVWTS) are Lumenal-facing. A helical membrane pass occupies residues 193 to 213 (VLLFAFATGVRSNGLVSVGFL). Over 214-234 (MHSQCQGFFSSLTMLNPLRQL) the chain is Cytoplasmic. A helical transmembrane segment spans residues 235–255 (FKLMASLFLSVFTLGLPFALF). Topologically, residues 256 to 327 (QYYAYTQFCL…KYYELKQVPN (72 aa)) are lumenal. The chain crosses the membrane as a helical span at residues 328 to 348 (FLLAAPVAILVAWATWTYVTT). Residues 349–378 (HPWLCLTLGLQRSKNNKTLEKPDLGFLSPQ) are Cytoplasmic-facing. A helical transmembrane segment spans residues 379–399 (VFVYVVHAAVLLLFGGLCMHV). The Lumenal segment spans residues 400–469 (QVLTRFLGSS…HWKTCSPVTR (70 aa)). Residues 470-490 (YILGYFLTYWLLGLLLHCNFL) traverse the membrane as a helical segment. Residues 491 to 493 (PWT) are Cytoplasmic-facing.

It belongs to the PIGV family. Post-translationally, not N-glycosylated.

It localises to the endoplasmic reticulum membrane. Its pathway is glycolipid biosynthesis; glycosylphosphatidylinositol-anchor biosynthesis. Alpha-1,6-mannosyltransferase that catalyzes the transfer of the second mannose, via an alpha-1,6 bond, from a dolichol-phosphate-mannose (Dol-P-Man) to the alpha-D-Man-(1-&gt;4)-alpha-D-GlcN-(1-&gt;6)-(1-radyl,2-acyl-sn-glycero-3-phospho)-2-acyl-inositol (also termed H2) intermediate to generate an alpha-D-Man-(1-&gt;6)-alpha-D-Man-(1-&gt;4)-alpha-D-GlcN-(1-&gt;6)-(1-radyl,2-acyl-sn-glycero-3-phospho)-2-acyl-inositol (also termed H3) and participates in the seventh step of the glycosylphosphatidylinositol-anchor biosynthesis. Also transfers the second mannose on a 2-PEtn-alpha-D-Man-(1-&gt;4)-alpha-D-GlcN-(1-&gt;6)-(1-radyl,2-acyl-sn-glycero-3-phospho)-2-acyl-inositol (also termed H5). The sequence is that of GPI alpha-1,6-mannosyltransferase 2 from Homo sapiens (Human).